The sequence spans 748 residues: Cysteine--tRNA ligase, cytoplasmic (748 aa).

Residues 1-25 (MAGSSGQQGKGRRVQPQWSPPAGTQ) are disordered. At alanine 2 the chain carries N-acetylalanine. Phosphoserine is present on serine 19. Cysteine 55 provides a ligand contact to Zn(2+). Glycine 56 contributes to the L-cysteine binding site. A 'HIGH' region motif is present at residues 57 to 67 (PTVYDASHMGH). Threonine 96 contributes to the L-cysteine binding site. Positions 101–104 (KIIK) match the 'KIIK' region motif. Serine 305 and serine 307 each carry phosphoserine. 3 residues coordinate Zn(2+): cysteine 348, histidine 373, and glutamate 377. Histidine 373 contributes to the L-cysteine binding site. The short motif at 406–410 (KMSKS) is the 'KMSKS' region element. Lysine 409 is a binding site for ATP. Composition is skewed to basic and acidic residues over residues 654 to 679 (KRQV…EAAK) and 700 to 717 (KFDE…KELS). 2 disordered regions span residues 654-686 (KRQV…MKIP) and 700-721 (KFDE…KGQA). The residue at position 746 (serine 746) is a Phosphoserine.

In terms of assembly, homodimer. Requires Zn(2+) as cofactor.

It is found in the cytoplasm. It carries out the reaction tRNA(Cys) + L-cysteine + ATP = L-cysteinyl-tRNA(Cys) + AMP + diphosphate. In terms of biological role, catalyzes the ATP-dependent ligation of cysteine to tRNA(Cys). The protein is Cysteine--tRNA ligase, cytoplasmic (CARS1) of Macaca fascicularis (Crab-eating macaque).